The sequence spans 358 residues: UDP-N-acetylglucosamine--N-acetylmuramyl-(pentapeptide) pyrophosphoryl-undecaprenol N-acetylglucosamine transferase (358 aa).

UDP-N-acetyl-alpha-D-glucosamine is bound by residues 13–15 (TGG), Asn-125, Arg-162, Ser-190, Ile-244, 263–268 (ALTVAE), and Gln-289.

This sequence belongs to the glycosyltransferase 28 family. MurG subfamily.

It localises to the cell inner membrane. The catalysed reaction is di-trans,octa-cis-undecaprenyl diphospho-N-acetyl-alpha-D-muramoyl-L-alanyl-D-glutamyl-meso-2,6-diaminopimeloyl-D-alanyl-D-alanine + UDP-N-acetyl-alpha-D-glucosamine = di-trans,octa-cis-undecaprenyl diphospho-[N-acetyl-alpha-D-glucosaminyl-(1-&gt;4)]-N-acetyl-alpha-D-muramoyl-L-alanyl-D-glutamyl-meso-2,6-diaminopimeloyl-D-alanyl-D-alanine + UDP + H(+). Its pathway is cell wall biogenesis; peptidoglycan biosynthesis. Functionally, cell wall formation. Catalyzes the transfer of a GlcNAc subunit on undecaprenyl-pyrophosphoryl-MurNAc-pentapeptide (lipid intermediate I) to form undecaprenyl-pyrophosphoryl-MurNAc-(pentapeptide)GlcNAc (lipid intermediate II). This is UDP-N-acetylglucosamine--N-acetylmuramyl-(pentapeptide) pyrophosphoryl-undecaprenol N-acetylglucosamine transferase from Halorhodospira halophila (strain DSM 244 / SL1) (Ectothiorhodospira halophila (strain DSM 244 / SL1)).